A 1575-amino-acid polypeptide reads, in one-letter code: Lysophospholipase NTE1 (1575 aa).

The tract at residues 1-56 (MNLTTTMPAAVAPDPPAQLAVSSRSLSDSSDAAGASRTSSSCRASSPSHCPTHAWN) is disordered. At 1–99 (MNLTTTMPAA…TLSPPNLLQG (99 aa)) the chain is on the cytoplasmic side. Positions 19–48 (LAVSSRSLSDSSDAAGASRTSSSCRASSPS) are enriched in low complexity. Residues 100 to 120 (IVSQLAMASYIGRLLLYLFQV) traverse the membrane as a helical segment. Topologically, residues 121–151 (VPSLLYWAITFTTITVPTALFTLFSMSLTFT) are lumenal. Residues 152–172 (MNFTTLLIIVLLLVSTVSWFI) traverse the membrane as a helical segment. Topologically, residues 173-1575 (RYRFLNIYSR…RTMAPRRASI (1403 aa)) are cytoplasmic. 2 disordered regions span residues 339-425 (DMES…AKSV) and 568-587 (GSASNPIRYGDHESTGVSPG). Basic residues predominate over residues 409–424 (RGHRRKRPSRPKRAKS). A nucleoside 3',5'-cyclic phosphate is bound by residues 737–856 (GGTS…TSYR) and 894–1014 (RLTT…IAQR). Residues 1272-1436 (LVLGGGGARG…VDNLTVARMK (165 aa)) enclose the PNPLA domain. The short motif at 1276–1281 (GGGARG) is the GXGXXG element. The short motif at 1303 to 1307 (GTSIG) is the GXSXG element. S1305 functions as the Nucleophile in the catalytic mechanism. D1423 (proton acceptor) is an active-site residue. Residues 1423–1425 (DGG) carry the DGA/G motif.

The protein belongs to the NTE family.

The protein localises to the endoplasmic reticulum membrane. The catalysed reaction is a 1-acyl-sn-glycero-3-phosphocholine + H2O = sn-glycerol 3-phosphocholine + a fatty acid + H(+). With respect to regulation, inhibited by organophosphorus esters. In terms of biological role, intracellular phospholipase B that catalyzes the double deacylation of phosphatidylcholine (PC) to glycerophosphocholine (GroPCho). Plays an important role in membrane lipid homeostasis. Responsible for the rapid PC turnover in response to inositol, elevated temperatures, or when choline is present in the growth medium. This chain is Lysophospholipase NTE1 (NTE1), found in Coccidioides immitis (strain RS) (Valley fever fungus).